The following is a 575-amino-acid chain: MSHAAEPARDGVEASAEGPRAVFVLLEERRPADSAQLLSLNSLLPESGIVADIELENVLDPDSFYELKSQPLPLRSSLPISLQATPATPATLSASSSAGGSRTPAMSSSSSSRVLLRQQLMRAQAQEQERRERREQAAAAPFPSPAPASPAISVVGVSAGGHTLSRPPPAQVPREVLKVQTHLENPTRYHLQQARRQQVKQYLSTTLGPKLASQALTPPPGPASAQPLPAPEAAHTTGPTGSAPNSPMALLTIGSSSEKEIDDVIDEIISLESSYNDEMLSYLPGGTTGLQLPSTLPVSGNLLDVYSSQGVATPAITVSNSCPAELPNIKREISETEAKALLKERQKKDNHNLIERRRRFNINDRIKELGTLIPKSSDPEMRWNKGTILKASVDYIRKLQKEQQRSKDLESRQRSLEQANRSLQLRIQELELQAQIHGLPVPPTPGLLSLATTSASDSLKPEQLDIEEEGRPGAATFHVGGGPAQNAPHQQPPAPPSDALLDLHFPSDHLGDLGDPFHLGLEDILMEEEEGVVGGLSGGALSPLRAASDPLLSSVSPAVSKASSRRSSFSMEEES.

At Ser47 the chain carries Phosphoserine; by MTOR. The segment covering 90–126 (ATLSASSSAGGSRTPAMSSSSSSRVLLRQQLMRAQAQ) has biased composition (low complexity). The disordered stretch occupies residues 90-153 (ATLSASSSAG…SPAPASPAIS (64 aa)). A compositionally biased stretch (basic and acidic residues) spans 127-136 (EQERRERREQ). Arg188 carries the post-translational modification Asymmetric dimethylarginine. The disordered stretch occupies residues 211–246 (LASQALTPPPGPASAQPLPAPEAAHTTGPTGSAPNS). A strong transcription activation domain region spans residues 260-271 (EIDDVIDEIISL). Ser321 carries the phosphoserine; by MTOR modification. A Glycyl lysine isopeptide (Lys-Gly) (interchain with G-Cter in SUMO2) cross-link involves residue Lys339. The 54-residue stretch at 346-399 (QKKDNHNLIERRRRFNINDRIKELGTLIPKSSDPEMRWNKGTILKASVDYIRKL) folds into the bHLH domain. A Nuclear localization signal motif is present at residues 356–359 (RRRR). The leucine-zipper stretch occupies residues 409 to 430 (LESRQRSLEQANRSLQLRIQEL). Disordered stretches follow at residues 473 to 498 (GAATFHVGGGPAQNAPHQQPPAPPSD) and 534 to 575 (GGLS…EEES). Residues 539–575 (GALSPLRAASDPLLSSVSPAVSKASSRRSSFSMEEES) show a composition bias toward low complexity. 6 positions are modified to phosphoserine: Ser542, Ser548, Ser554, Ser556, Ser560, and Ser568.

Belongs to the MiT/TFE family. In terms of assembly, homodimer and heterodimer; with TFEB or MITF. Interacts with RRAGC/RagC GDP-bound and RRAGD/RagD GDP-bound; promoting its recruitment to lysosomal membrane in the presence of nutrients. Interacts with TSC22D1; the interaction is enhanced in the presence of TGF-beta. Sumoylated; does not affect dimerization with MITF. In terms of processing, phosphorylation ar Ser-47 and Ser-321 by MTOR via non-canonical mTORC1 pathway regulates its stability and subcellular location, respectively. When nutrients are present, phosphorylation by MTOR at Ser-47 promotes ubiquitination by the SCF(BTRC) complex, followed by degradation. When nutrients are present, phosphorylation by MTOR at Ser-321 also promotes association with 14-3-3/YWHA adapters and retention in the cytosol. Phosphorylation at Ser-47 plays a more critical role than phosphorylation at Ser-321 for TFE3 inactivation. Inhibition of mTORC1, starvation and lysosomal disruption, promotes dephosphorylation and transcription factor activity. Post-translationally, ubiquitinated by the SCF(BTRC) and SCF(FBXW11) complexes following phosphorylation at Ser-47 by MTOR, leading to its degradation by the proteasome. As to expression, ubiquitous in fetal and adult tissues.

It is found in the cytoplasm. The protein localises to the cytosol. Its subcellular location is the nucleus. The protein resides in the lysosome membrane. Its function is as follows. Transcription factor that acts as a master regulator of lysosomal biogenesis and immune response. Specifically recognizes and binds E-box sequences (5'-CANNTG-3'); efficient DNA-binding requires dimerization with itself or with another MiT/TFE family member such as TFEB or MITF. Involved in the cellular response to amino acid availability by acting downstream of MTOR: in the presence of nutrients, TFE3 phosphorylation by MTOR promotes its inactivation. Upon starvation or lysosomal stress, inhibition of MTOR induces TFE3 dephosphorylation, resulting in transcription factor activity. Specifically recognizes and binds the CLEAR-box sequence (5'-GTCACGTGAC-3') present in the regulatory region of many lysosomal genes, leading to activate their expression, thereby playing a central role in expression of lysosomal genes. Maintains the pluripotent state of embryonic stem cells by promoting the expression of genes such as ESRRB; mTOR-dependent TFE3 cytosolic retention and inactivation promotes exit from pluripotency. Required to maintain the naive pluripotent state of hematopoietic stem cell; mTOR-dependent cytoplasmic retention of TFE3 promotes the exit of hematopoietic stem cell from pluripotency. TFE3 activity is also involved in the inhibition of neuronal progenitor differentiation. Acts as a positive regulator of browning of adipose tissue by promoting expression of target genes; mTOR-dependent phosphorylation promotes cytoplasmic retention of TFE3 and inhibits browning of adipose tissue. In association with TFEB, activates the expression of CD40L in T-cells, thereby playing a role in T-cell-dependent antibody responses in activated CD4(+) T-cells and thymus-dependent humoral immunity. Specifically recognizes the MUE3 box, a subset of E-boxes, present in the immunoglobulin enhancer. It also binds very well to a USF/MLTF site. Promotes TGF-beta-induced transcription of COL1A2; via its interaction with TSC22D1 at E-boxes in the gene proximal promoter. May regulate lysosomal positioning in response to nutrient deprivation by promoting the expression of PIP4P1. The chain is Transcription factor E3 from Homo sapiens (Human).